The primary structure comprises 354 residues: Glucose 1-dehydrogenase (354 aa).

The tract at residues 1–27 (MKVIGVTRDDDGPQLLERERPSPDPGE) is disordered. The span at 7–22 (TRDDDGPQLLERERPS) shows a compositional bias: basic and acidic residues. Asp-38 serves as a coordination point for Zn(2+). Thr-40 serves as a coordination point for substrate. Zn(2+) contacts are provided by His-63 and Glu-64. Residues 91–110 (PNGETNEYFRRGEPDMAPDG) are disordered. Residues Glu-114 and Glu-150 each contribute to the substrate site. Glu-150 contributes to the Zn(2+) binding site. NADP(+) is bound by residues 181-184 (NGSL), 204-205 (RR), 269-271 (LGI), and 298-300 (TVN). Position 300 (Asn-300) interacts with substrate.

This sequence belongs to the zinc-containing alcohol dehydrogenase family. Glucose 1-dehydrogenase subfamily. Requires Zn(2+) as cofactor.

The enzyme catalyses D-glucose + NAD(+) = D-glucono-1,5-lactone + NADH + H(+). It carries out the reaction D-glucose + NADP(+) = D-glucono-1,5-lactone + NADPH + H(+). Functionally, catalyzes the NAD(P)(+)-dependent oxidation of D-glucose to D-gluconate via gluconolactone. Can utilize both NAD(+) and NADP(+) as electron acceptor. Is involved in the degradation of glucose through a modified Entner-Doudoroff pathway. The sequence is that of Glucose 1-dehydrogenase from Haloarcula marismortui (strain ATCC 43049 / DSM 3752 / JCM 8966 / VKM B-1809) (Halobacterium marismortui).